A 186-amino-acid chain; its full sequence is Elongation factor P (186 aa).

The protein belongs to the elongation factor P family.

The protein localises to the cytoplasm. It participates in protein biosynthesis; polypeptide chain elongation. Functionally, involved in peptide bond synthesis. Stimulates efficient translation and peptide-bond synthesis on native or reconstituted 70S ribosomes in vitro. Probably functions indirectly by altering the affinity of the ribosome for aminoacyl-tRNA, thus increasing their reactivity as acceptors for peptidyl transferase. The polypeptide is Elongation factor P (Prochlorococcus marinus (strain MIT 9211)).